A 159-amino-acid chain; its full sequence is Small ribosomal subunit protein uS7 (159 aa).

The protein belongs to the universal ribosomal protein uS7 family. As to quaternary structure, part of the 30S ribosomal subunit. Contacts proteins S9 and S11.

Functionally, one of the primary rRNA binding proteins, it binds directly to 16S rRNA where it nucleates assembly of the head domain of the 30S subunit. Is located at the subunit interface close to the decoding center, probably blocks exit of the E-site tRNA. The chain is Small ribosomal subunit protein uS7 from Wolbachia sp. subsp. Brugia malayi (strain TRS).